Consider the following 116-residue polypeptide: NADH-ubiquinone oxidoreductase chain 3 (116 aa).

Helical transmembrane passes span 3-23 (LVTTIITITITLSAVLATISF), 56-76 (FFLIAILFLLFDLEIALLLPL), and 84-104 (APTLTLLWSTAVLALLTLGLI).

This sequence belongs to the complex I subunit 3 family.

The protein localises to the mitochondrion membrane. The catalysed reaction is a ubiquinone + NADH + 5 H(+)(in) = a ubiquinol + NAD(+) + 4 H(+)(out). Its function is as follows. Core subunit of the mitochondrial membrane respiratory chain NADH dehydrogenase (Complex I) that is believed to belong to the minimal assembly required for catalysis. Complex I functions in the transfer of electrons from NADH to the respiratory chain. The immediate electron acceptor for the enzyme is believed to be ubiquinone. This is NADH-ubiquinone oxidoreductase chain 3 (MT-ND3) from Oncorhynchus nerka (Sockeye salmon).